The chain runs to 305 residues: Phosphatidate cytidylyltransferase (305 aa).

Helical transmembrane passes span 27 to 47, 67 to 87, 96 to 116, 124 to 144, 150 to 170, 202 to 222, 232 to 252, and 277 to 297; these read FLVI…VGLL, FPFS…ALTC, FPEH…IRLV, LGPI…SVPI, ILYG…AIFL, TVVG…LFYS, IAVP…GFFG, and MLDV…ILLI.

It belongs to the CDS family.

The protein localises to the cell membrane. It catalyses the reaction a 1,2-diacyl-sn-glycero-3-phosphate + CTP + H(+) = a CDP-1,2-diacyl-sn-glycerol + diphosphate. It functions in the pathway phospholipid metabolism; CDP-diacylglycerol biosynthesis; CDP-diacylglycerol from sn-glycerol 3-phosphate: step 3/3. This is Phosphatidate cytidylyltransferase (cdsA) from Chlamydia trachomatis serovar D (strain ATCC VR-885 / DSM 19411 / UW-3/Cx).